A 273-amino-acid polypeptide reads, in one-letter code: uncharacterized protein (273 aa).

A compositionally biased stretch (basic residues) spans 1 to 10 (MSSKKVKYNP). 2 disordered regions span residues 1–32 (MSSK…FGFN) and 50–124 (EDVE…QSSP). Composition is skewed to polar residues over residues 12–24 (KSAS…SASA), 55–64 (QSFNGKSSNL), and 92–124 (PQSS…QSSP). Residue S123 is modified to Phosphoserine.

It localises to the nucleus. It is found in the cytoplasm. The protein localises to the cytoskeleton. The protein resides in the spindle. This is an uncharacterized protein from Schizosaccharomyces pombe (strain 972 / ATCC 24843) (Fission yeast).